The sequence spans 328 residues: Cytochrome c biogenesis protein CcsA (328 aa).

8 consecutive transmembrane segments (helical) span residues 13–33 (ISFSVVSIVLIIYFLTLLVNL), 46–66 (GIIITFFGITGLLLTRWIFSG), 73–93 (LYESLIFLSWAFSIIHMVSYF), 101–121 (LNAITAPSAIFIQGFATSGLL), 146–166 (MILGYGALLCGSLLSIALLVI), 234–254 (IISLGFIFLTVGILSGAVWAN), 263–283 (WDPKETWAFITWTIFAIYLHI), and 295–315 (AIVASIGFLLIWICYFGVNLL).

The protein belongs to the CcmF/CycK/Ccl1/NrfE/CcsA family. As to quaternary structure, may interact with Ccs1.

It is found in the plastid. The protein localises to the chloroplast thylakoid membrane. Functionally, required during biogenesis of c-type cytochromes (cytochrome c6 and cytochrome f) at the step of heme attachment. This chain is Cytochrome c biogenesis protein CcsA, found in Olimarabidopsis pumila (Dwarf rocket).